The sequence spans 202 residues: Dephospho-CoA kinase (202 aa).

A DPCK domain is found at 4 to 201; that stretch reads VIGLTGGIAS…QKYLAMSKQN (198 aa). Residue 12–17 participates in ATP binding; that stretch reads ASGKTT.

The protein belongs to the CoaE family.

It is found in the cytoplasm. It carries out the reaction 3'-dephospho-CoA + ATP = ADP + CoA + H(+). It functions in the pathway cofactor biosynthesis; coenzyme A biosynthesis; CoA from (R)-pantothenate: step 5/5. Its function is as follows. Catalyzes the phosphorylation of the 3'-hydroxyl group of dephosphocoenzyme A to form coenzyme A. In Vibrio vulnificus (strain CMCP6), this protein is Dephospho-CoA kinase.